The chain runs to 63 residues: Large ribosomal subunit protein bL28 (63 aa).

Belongs to the bacterial ribosomal protein bL28 family.

The polypeptide is Large ribosomal subunit protein bL28 (Clostridium acetobutylicum (strain ATCC 824 / DSM 792 / JCM 1419 / IAM 19013 / LMG 5710 / NBRC 13948 / NRRL B-527 / VKM B-1787 / 2291 / W)).